Reading from the N-terminus, the 316-residue chain is Insulin-like growth factor-binding protein 2 (316 aa).

A signal peptide spans 1–29; it reads MLPRLGGTALSLLPLLLLLLGTGGRGARA. The IGFBP N-terminal domain occupies 31 to 126; that stretch reads VLFRCPPCTP…VLGEGTCEKR (96 aa). Intrachain disulfides connect Cys-35–Cys-76, Cys-38–Cys-78, Cys-46–Cys-79, Cys-68–Cys-82, Cys-90–Cys-103, and Cys-97–Cys-123. Residues 189–217 form a disordered region; sequence QHRQMGKGGKHHLGLEEPKKLRPPPARTP. The region spanning 215 to 297 is the Thyroglobulin type-1 domain; the sequence is RTPCQQELDQ…APTIRGDPEC (83 aa). 3 disulfides stabilise this stretch: Cys-218–Cys-252, Cys-263–Cys-274, and Cys-276–Cys-297. Residues 292 to 294 carry the Cell attachment site motif; sequence RGD.

As to quaternary structure, interacts with IGF1. Interacts with IGF2. Interacts (via RGD motif) with integrin alpha5/ITGA5; this interaction induces cell migration, adhesion or apoptosis according to the context. Interacts with PTPRB; this interaction leads to PTPRB dimerization and inactivation. Post-translationally, cleaved by MMP9 leading to release of free IGF2 from IGFBP2-IGF2 complex, which contributes to enhance the motility and the growth of astrocytes. In terms of processing, O-glycosylated.

Its subcellular location is the secreted. Functionally, may have both growth-inhibiting and growth-promoting effects, depending on tissue type; increases IGF-induced DNA synthesis in the uterine epithelium. IGF-binding proteins prolong the half-life of the IGFs and have been shown to either inhibit or stimulate the growth promoting effects of the IGFs on cell culture. They alter the interaction of IGFs with their cell surface receptors. Its function is as follows. Multifunctional protein that plays a critical role in regulating the availability of IGFs such as IGF1 and IGF2 to their receptors and thereby regulates IGF-mediated cellular processes including proliferation, differentiation, and apoptosis in a cell-type specific manner. Functions coordinately with receptor protein tyrosine phosphatase beta/PTPRB and the IGF1 receptor to regulate IGF1-mediated signaling by stimulating the phosphorylation of PTEN leading to its inactivation and AKT1 activation. Plays a positive role in cell migration via interaction with integrin alpha5/ITGA5 through an RGD motif. Additionally, interaction with ITGA5/ITGB1 enhances the adhesion of endothelial progenitor cells to endothelial cells. Upon mitochondrial damage, facilitates apoptosis with ITGA5 of podocytes, and then activates the phosphorylation of focal adhesion kinase (FAK)-mediated mitochondrial injury. The chain is Insulin-like growth factor-binding protein 2 (IGFBP2) from Sus scrofa (Pig).